The primary structure comprises 180 residues: ATP synthase subunit b (180 aa).

A helical membrane pass occupies residues 26-46 (IPLMLATLAALVISIFFLTYF).

It belongs to the ATPase B chain family. In terms of assembly, F-type ATPases have 2 components, F(1) - the catalytic core - and F(0) - the membrane proton channel. F(1) has five subunits: alpha(3), beta(3), gamma(1), delta(1), epsilon(1). F(0) has three main subunits: a(1), b(2) and c(10-14). The alpha and beta chains form an alternating ring which encloses part of the gamma chain. F(1) is attached to F(0) by a central stalk formed by the gamma and epsilon chains, while a peripheral stalk is formed by the delta and b chains.

The protein localises to the cell membrane. Its function is as follows. F(1)F(0) ATP synthase produces ATP from ADP in the presence of a proton or sodium gradient. F-type ATPases consist of two structural domains, F(1) containing the extramembraneous catalytic core and F(0) containing the membrane proton channel, linked together by a central stalk and a peripheral stalk. During catalysis, ATP synthesis in the catalytic domain of F(1) is coupled via a rotary mechanism of the central stalk subunits to proton translocation. Component of the F(0) channel, it forms part of the peripheral stalk, linking F(1) to F(0). The polypeptide is ATP synthase subunit b (Mycoplasmopsis pulmonis (strain UAB CTIP) (Mycoplasma pulmonis)).